A 63-amino-acid chain; its full sequence is Translational regulator CsrA (63 aa).

Belongs to the CsrA/RsmA family. In terms of assembly, homodimer; the beta-strands of each monomer intercalate to form a hydrophobic core, while the alpha-helices form wings that extend away from the core.

It is found in the cytoplasm. In terms of biological role, a key translational regulator that binds mRNA to regulate translation initiation and/or mRNA stability. Mediates global changes in gene expression, shifting from rapid growth to stress survival by linking envelope stress, the stringent response and the catabolite repression systems. Usually binds in the 5'-UTR; binding at or near the Shine-Dalgarno sequence prevents ribosome-binding, repressing translation, binding elsewhere in the 5'-UTR can activate translation and/or stabilize the mRNA. Its function is antagonized by small RNA(s). The sequence is that of Translational regulator CsrA from Haemophilus influenzae (strain PittEE).